The sequence spans 324 residues: Glyoxylate/hydroxypyruvate reductase B (324 aa).

Active-site residues include Arg-237 and Glu-266. His-285 serves as the catalytic Proton donor.

It belongs to the D-isomer specific 2-hydroxyacid dehydrogenase family. GhrB subfamily. In terms of assembly, homodimer.

Its subcellular location is the cytoplasm. It catalyses the reaction glycolate + NADP(+) = glyoxylate + NADPH + H(+). The enzyme catalyses (R)-glycerate + NAD(+) = 3-hydroxypyruvate + NADH + H(+). The catalysed reaction is (R)-glycerate + NADP(+) = 3-hydroxypyruvate + NADPH + H(+). Its function is as follows. Catalyzes the NADPH-dependent reduction of glyoxylate and hydroxypyruvate into glycolate and glycerate, respectively. This Enterobacter sp. (strain 638) protein is Glyoxylate/hydroxypyruvate reductase B.